A 188-amino-acid chain; its full sequence is Adenine phosphoribosyltransferase (188 aa).

The protein belongs to the purine/pyrimidine phosphoribosyltransferase family. In terms of assembly, homodimer.

It is found in the cytoplasm. The enzyme catalyses AMP + diphosphate = 5-phospho-alpha-D-ribose 1-diphosphate + adenine. The protein operates within purine metabolism; AMP biosynthesis via salvage pathway; AMP from adenine: step 1/1. In terms of biological role, catalyzes a salvage reaction resulting in the formation of AMP, that is energically less costly than de novo synthesis. The protein is Adenine phosphoribosyltransferase of Neisseria meningitidis serogroup A / serotype 4A (strain DSM 15465 / Z2491).